Reading from the N-terminus, the 945-residue chain is Splicing factor, suppressor of white-apricot homolog (945 aa).

Disordered stretches follow at residues 1-28 (MYGAGGGRAKPERKGGVKEEAGPGGTGT) and 156-185 (DYYDPSEPTEEEEPSKQREKNEAENLEENE). Basic and acidic residues-rich tracts occupy residues 9–21 (AKPERKGGVKEEA) and 169–178 (PSKQREKNEA). One copy of the SURP motif 1 repeat lies at 211–253 (IIERTANFVCKQGAQFEIMLKAKQARNSQFDFLRFDHYLNPYY). The interval 271 to 301 (SKNEEKKKSGPTSDNEEEDDEEDGSYLHPSL) is disordered. Serine 283 bears the Phosphoserine mark. Residues 284–294 (DNEEEDDEEDG) are compositionally biased toward acidic residues. Lysine 315 bears the N6-acetyllysine mark. Disordered stretches follow at residues 332 to 355 (KAQADSSAPAPPTADGTPAQPSQV) and 403 to 448 (SSSP…PVAI). Residues 335–352 (ADSSAPAPPTADGTPAQP) are compositionally biased toward low complexity. Pro residues predominate over residues 412–426 (VPPPPGTTPPPPPTT). Positions 427 to 447 (AEPSSGVTSTTTTTSALAPVA) are enriched in low complexity. An SURP motif 2 repeat occupies 458 to 498 (VIDKLAEYVARNGLKFETSVRAKNDQRFEFLQPWHQYNAYY). Disordered stretches follow at residues 512 to 564 (GSTQ…KSTV), 589 to 680 (PLEK…QAER), and 712 to 921 (DTGV…VQSK). The span at 514–527 (TQAASTAEEAPTET) shows a compositional bias: low complexity. Over residues 528 to 540 (AVEESGEAGEDGA) the composition is skewed to acidic residues. Positions 589–598 (PLEKNRVKLD) are enriched in basic and acidic residues. Phosphoserine occurs at positions 601 and 621. A compositionally biased stretch (low complexity) spans 615–630 (SSVANPSPAAAPPSVA). A coiled-coil region spans residues 632–686 (EEKKPQLTQEELEAKQAKQKLEDRLAAAAREKLAQASKESKEKQLQAERKRKAAL). Threonine 639 carries the phosphothreonine modification. Composition is skewed to basic and acidic residues over residues 643–679 (LEAKQAKQKLEDRLAAAAREKLAQASKESKEKQLQAE) and 733–752 (KPPERPSNRCRDPPREEERE). Composition is skewed to basic residues over residues 753–787 (KKKKKHKKRSRTRSRSPKYHSSSKPRSRSHSKAKH) and 795–810 (TVRRSRSRSRSPRRRA). Residues 811–821 (HSPERRREERS) are compositionally biased toward basic and acidic residues. Serine 829 and serine 831 each carry phosphoserine. Residues 835-861 (SRKRTRSRSPHEKKKKRRSRSRTKAKA) are compositionally biased toward basic residues. Residues 871–894 (QAAQRPSAHSAHSASISPVESRGS) show a composition bias toward low complexity. Residues 895–908 (SQERSRGVSQEKDG) are compositionally biased toward basic and acidic residues. Phosphoserine is present on residues serine 899 and serine 903. Positions 909–920 (QISSAIVSSVQS) are enriched in low complexity.

The protein localises to the nucleus. In terms of biological role, plays a role as an alternative splicing regulator. Regulates its own expression at the level of RNA processing. Also regulates the splicing of fibronectin and CD45 genes. May act, at least in part, by interaction with other R/S-containing splicing factors. Represses the splicing of MAPT/Tau exon 10. The chain is Splicing factor, suppressor of white-apricot homolog (Sfswap) from Mus musculus (Mouse).